The primary structure comprises 358 residues: NADH-quinone oxidoreductase subunit H (358 aa).

8 helical membrane-spanning segments follow: residues 30-50, 96-116, 129-149, 165-185, 201-221, 264-284, 297-317, and 336-356; these read IVIG…MIFM, FLYN…FSCL, VGIF…LLAG, GAQM…IVIL, GWFL…YLIA, LFII…PLHI, IPGF…LMWI, and YLVP…VFKL.

This sequence belongs to the complex I subunit 1 family. In terms of assembly, NDH-1 is composed of 14 different subunits. Subunits NuoA, H, J, K, L, M, N constitute the membrane sector of the complex.

Its subcellular location is the cell inner membrane. It catalyses the reaction a quinone + NADH + 5 H(+)(in) = a quinol + NAD(+) + 4 H(+)(out). NDH-1 shuttles electrons from NADH, via FMN and iron-sulfur (Fe-S) centers, to quinones in the respiratory chain. The immediate electron acceptor for the enzyme in this species is believed to be ubiquinone. Couples the redox reaction to proton translocation (for every two electrons transferred, four hydrogen ions are translocated across the cytoplasmic membrane), and thus conserves the redox energy in a proton gradient. This subunit may bind ubiquinone. This is NADH-quinone oxidoreductase subunit H from Phocaeicola vulgatus (strain ATCC 8482 / DSM 1447 / JCM 5826 / CCUG 4940 / NBRC 14291 / NCTC 11154) (Bacteroides vulgatus).